The chain runs to 305 residues: Methionyl-tRNA formyltransferase (305 aa).

108–111 is a binding site for (6S)-5,6,7,8-tetrahydrofolate; sequence SLLP.

It belongs to the Fmt family.

It catalyses the reaction L-methionyl-tRNA(fMet) + (6R)-10-formyltetrahydrofolate = N-formyl-L-methionyl-tRNA(fMet) + (6S)-5,6,7,8-tetrahydrofolate + H(+). In terms of biological role, attaches a formyl group to the free amino group of methionyl-tRNA(fMet). The formyl group appears to play a dual role in the initiator identity of N-formylmethionyl-tRNA by promoting its recognition by IF2 and preventing the misappropriation of this tRNA by the elongation apparatus. This chain is Methionyl-tRNA formyltransferase, found in Clavibacter michiganensis subsp. michiganensis (strain NCPPB 382).